The chain runs to 818 residues: MIMDNFDSPFLYNRPEITVDSLKKSIVYKLIFSIGRSPKEASQRDWLNATLYAVRDFVTEGWITTARQSRSEETRRVYYLSMEFLIGRTLSNAMLAEGVYDVAKQALSELNVNLEDVLEKEVDPGLGNGGLGRLAACFMDSIATLALPGVGYGIRYEYGMFKQEIEDGHQVEKPDAWLDKGAAWEFIRPSKRHTVRFGGGIHFEGKKCIWTSKEEVEALAYDQMIPGYANDSAATLRLWSAYAGDRFDLADFNKGDYFAAVQDRTLSKNISRVLYPDDSTWSGRELRLRQEYFLVSASLQDIIYRHKRIHNTMENFADKVAIHLNDTHPALAIPELMVILIDQEGYEWKKAWDITRRVFSYTCHTLMSEALETWPVEMMAHILPRHLQMIFEINDYFLEYVRTYVSTDAEFIRRVSLIEEGDHRKVRMGWLSVVGSNKVNGVAAIHSELMVTSTFADFARIYPERFTNVTNGITPRRWIGVANPELSALFDRYIGKEWRRDLSQLTLLKDKVQDPELKKSIAQIKYNNKVKLANYIKNELGVEVDPNALFDVQVKRIHEYKRQILNVLHIIARYNAMLENPEKDWVPRVFILAGKAASAYYAAKQTINLINDVANIINHDERLQGRLKVVFIPNYSVSLAELIIPAADISEQISLAGTEASGTSNMKFALNGALTIGTLDGANVEILDNVGQDHIFIFGNTVEQVESLRRHGYRPFDYYQNDEELRKVVDQIISGRFSPTDANRYHQLLQSLQYHDYYQAFADFRSYVDMQQNVDAKYQDQNAWIDSTLQNIVNMSYFSSDRTILEYAEKIWKIKPVK.

An N6-(pyridoxal phosphate)lysine modification is found at Lys-667.

Belongs to the glycogen phosphorylase family. Pyridoxal 5'-phosphate serves as cofactor.

The enzyme catalyses [(1-&gt;4)-alpha-D-glucosyl](n) + phosphate = [(1-&gt;4)-alpha-D-glucosyl](n-1) + alpha-D-glucose 1-phosphate. Functionally, phosphorylase is an important allosteric enzyme in carbohydrate metabolism. Enzymes from different sources differ in their regulatory mechanisms and in their natural substrates. However, all known phosphorylases share catalytic and structural properties. In Pasteurella multocida (strain Pm70), this protein is Glycogen phosphorylase (glgP).